A 163-amino-acid polypeptide reads, in one-letter code: Inner membrane protein YcdZ (163 aa).

The Cytoplasmic segment spans residues 1–2; it reads MN. Residues 3 to 23 form a helical membrane-spanning segment; the sequence is ILLSIAITTGILSGIWGWVAV. Residue serine 24 is a topological domain, periplasmic. A helical membrane pass occupies residues 25–45; that stretch reads LGLLSWAGFLGCTAYFACPQG. The Cytoplasmic segment spans residues 46 to 48; it reads GLK. A helical membrane pass occupies residues 49–69; that stretch reads GLAISAATLLSGVVWAMVIIY. Topologically, residues 70–71 are periplasmic; sequence GS. A helical membrane pass occupies residues 72-92; sequence ALAPHLEILGYVITGIVAFLM. The Cytoplasmic segment spans residues 93–98; it reads CIQAKQ. Residues 99 to 119 traverse the membrane as a helical segment; that stretch reads LLLSFVPGTFIGACATFAGQG. The Periplasmic portion of the chain corresponds to 120-122; sequence DWK. Residues 123–143 traverse the membrane as a helical segment; the sequence is LVLPSLALGLIFGYAMKNSGL. At 144–163 the chain is on the cytoplasmic side; that stretch reads WLAARSAKTAHREQEIKNKA.

To E.coli YahC.

It is found in the cell inner membrane. This is Inner membrane protein YcdZ (ycdZ) from Escherichia coli (strain K12).